The sequence spans 157 residues: Crossover junction endodeoxyribonuclease RuvC (157 aa).

Catalysis depends on residues Asp7, Glu67, and Asp139. Residues Asp7, Glu67, and Asp139 each coordinate Mg(2+).

The protein belongs to the RuvC family. In terms of assembly, homodimer which binds Holliday junction (HJ) DNA. The HJ becomes 2-fold symmetrical on binding to RuvC with unstacked arms; it has a different conformation from HJ DNA in complex with RuvA. In the full resolvosome a probable DNA-RuvA(4)-RuvB(12)-RuvC(2) complex forms which resolves the HJ. Mg(2+) is required as a cofactor.

It is found in the cytoplasm. The catalysed reaction is Endonucleolytic cleavage at a junction such as a reciprocal single-stranded crossover between two homologous DNA duplexes (Holliday junction).. Its function is as follows. The RuvA-RuvB-RuvC complex processes Holliday junction (HJ) DNA during genetic recombination and DNA repair. Endonuclease that resolves HJ intermediates. Cleaves cruciform DNA by making single-stranded nicks across the HJ at symmetrical positions within the homologous arms, yielding a 5'-phosphate and a 3'-hydroxyl group; requires a central core of homology in the junction. The consensus cleavage sequence is 5'-(A/T)TT(C/G)-3'. Cleavage occurs on the 3'-side of the TT dinucleotide at the point of strand exchange. HJ branch migration catalyzed by RuvA-RuvB allows RuvC to scan DNA until it finds its consensus sequence, where it cleaves and resolves the cruciform DNA. The protein is Crossover junction endodeoxyribonuclease RuvC of Prochlorococcus marinus (strain MIT 9301).